A 158-amino-acid chain; its full sequence is Ankyrin repeat domain-containing protein 37 (158 aa).

ANK repeat units lie at residues 1-25, 30-59, and 63-92; these read MLLL…SVNA, CKQS…DLNQ, and LGEA…QIDL. The Nuclear localization signal signature appears at 129–149; the sequence is EHPDRNDCVAVLRQKRSLGSV.

Ubiquitinated by the CRL2(FEM1B) complex, leading to its degradation. Mainly expressed in testis, small intestine, colon, blood leukocytes and in pancreatic adenocarcinoma cells.

The protein localises to the nucleus. The protein resides in the cytoplasm. The chain is Ankyrin repeat domain-containing protein 37 from Homo sapiens (Human).